Here is an 889-residue protein sequence, read N- to C-terminus: Extended synaptotagmin-3 (889 aa).

The tract at residues Met1 to Ala65 is disordered. Over Met1–Gly66 the chain is Cytoplasmic. Composition is skewed to basic and acidic residues over residues Thr17–Glu28 and Pro41–Arg58. 2 consecutive transmembrane segments (helical) span residues Glu67–Tyr91 and Leu92–Phe112. Residues Trp113–Ser889 are Cytoplasmic-facing. The SMP-LTD domain maps to Asp155–Ser333. C2 domains are found at residues Pro331 to Phe452 and Trp468 to Lys618. Ca(2+) contacts are provided by Lys363, Asp364, Asp376, Asp423, Glu424, Asp425, Asp427, Asp429, and Asp430. The tract at residues Ser649–Ser724 is disordered. The span at His658–Ala671 shows a compositional bias: basic residues. Composition is skewed to low complexity over residues His672 to Gln682 and Ile691 to Thr714. The 123-residue stretch at Met757–Phe879 folds into the C2 3 domain. The segment at Arg804–Lys811 is required for phosphatidylinositol 4,5-bisphosphate-dependent location at the cell membrane.

Belongs to the extended synaptotagmin family.

It localises to the cell membrane. Its subcellular location is the endoplasmic reticulum membrane. In terms of biological role, tethers the endoplasmic reticulum to the cell membrane and promotes the formation of appositions between the endoplasmic reticulum and the cell membrane. Binds glycerophospholipids in a barrel-like domain and may play a role in cellular lipid transport. This is Extended synaptotagmin-3 (esyt3) from Xenopus tropicalis (Western clawed frog).